Here is a 432-residue protein sequence, read N- to C-terminus: Enolase (432 aa).

Q167 is a binding site for (2R)-2-phosphoglycerate. The active-site Proton donor is E209. Mg(2+) is bound by residues D246, E291, and D318. 4 residues coordinate (2R)-2-phosphoglycerate: K343, R372, S373, and K394. K343 functions as the Proton acceptor in the catalytic mechanism.

The protein belongs to the enolase family. In terms of assembly, component of the RNA degradosome, a multiprotein complex involved in RNA processing and mRNA degradation. Mg(2+) serves as cofactor.

Its subcellular location is the cytoplasm. The protein localises to the secreted. It localises to the cell surface. It catalyses the reaction (2R)-2-phosphoglycerate = phosphoenolpyruvate + H2O. Its pathway is carbohydrate degradation; glycolysis; pyruvate from D-glyceraldehyde 3-phosphate: step 4/5. Functionally, catalyzes the reversible conversion of 2-phosphoglycerate (2-PG) into phosphoenolpyruvate (PEP). It is essential for the degradation of carbohydrates via glycolysis. This Pseudoalteromonas translucida (strain TAC 125) protein is Enolase.